Reading from the N-terminus, the 309-residue chain is Probable manganese-dependent inorganic pyrophosphatase (309 aa).

Positions 9, 13, 15, 75, 97, and 149 each coordinate Mn(2+).

The protein belongs to the PPase class C family. Mn(2+) is required as a cofactor.

Its subcellular location is the cytoplasm. The catalysed reaction is diphosphate + H2O = 2 phosphate + H(+). This Bacillus cereus (strain G9842) protein is Probable manganese-dependent inorganic pyrophosphatase.